Reading from the N-terminus, the 393-residue chain is Polygalacturonase (393 aa).

The N-terminal stretch at 1-23 (MANRRSLFSLSLIFVFMINSAIA) is a signal peptide. 6 PbH1 repeats span residues 115–136 (VNGV…WACK), 178–204 (FQNV…HVQM), 205–226 (SSGV…SIGP), 228–248 (TSNL…SIGS), 258–279 (VQNV…RIKS), and 288–309 (ARNI…VIDQ). The active-site Proton donor is the D219. C221 and C238 form a disulfide bridge. H242 is a catalytic residue. N-linked (GlcNAc...) asparagine glycosylation occurs at N260. 2 disulfides stabilise this stretch: C349–C355 and C376–C392.

It belongs to the glycosyl hydrolase 28 family.

It is found in the secreted. It localises to the cell wall. The catalysed reaction is (1,4-alpha-D-galacturonosyl)n+m + H2O = (1,4-alpha-D-galacturonosyl)n + (1,4-alpha-D-galacturonosyl)m.. Acts in concert with the pectinesterase, in the ripening process. Is involved in cell wall metabolism, specifically in polyuronide degradation. The polypeptide is Polygalacturonase (Prunus persica (Peach)).